The chain runs to 292 residues: Protoheme IX farnesyltransferase (292 aa).

9 consecutive transmembrane segments (helical) span residues 11-31, 37-57, 85-105, 108-128, 133-153, 163-183, 199-219, 223-243, and 261-281; these read FGIV…GFQI, WKIF…SLAL, AAAG…LFKL, VAGW…TLWW, VFAA…GYAV, SLYL…VLAI, VALG…VYVG, AAPM…PFVF, and WLAF…IPVI.

This sequence belongs to the UbiA prenyltransferase family. Protoheme IX farnesyltransferase subfamily.

The protein resides in the cell inner membrane. The catalysed reaction is heme b + (2E,6E)-farnesyl diphosphate + H2O = Fe(II)-heme o + diphosphate. It functions in the pathway porphyrin-containing compound metabolism; heme O biosynthesis; heme O from protoheme: step 1/1. Functionally, converts heme B (protoheme IX) to heme O by substitution of the vinyl group on carbon 2 of heme B porphyrin ring with a hydroxyethyl farnesyl side group. This Bdellovibrio bacteriovorus (strain ATCC 15356 / DSM 50701 / NCIMB 9529 / HD100) protein is Protoheme IX farnesyltransferase.